The following is a 290-amino-acid chain: Bifunctional protein FolD (290 aa).

Residues 169-171, I194, and I235 contribute to the NADP(+) site; that span reads GAS.

This sequence belongs to the tetrahydrofolate dehydrogenase/cyclohydrolase family. As to quaternary structure, homodimer.

It catalyses the reaction (6R)-5,10-methylene-5,6,7,8-tetrahydrofolate + NADP(+) = (6R)-5,10-methenyltetrahydrofolate + NADPH. The enzyme catalyses (6R)-5,10-methenyltetrahydrofolate + H2O = (6R)-10-formyltetrahydrofolate + H(+). Its pathway is one-carbon metabolism; tetrahydrofolate interconversion. In terms of biological role, catalyzes the oxidation of 5,10-methylenetetrahydrofolate to 5,10-methenyltetrahydrofolate and then the hydrolysis of 5,10-methenyltetrahydrofolate to 10-formyltetrahydrofolate. In Helicobacter pylori (strain HPAG1), this protein is Bifunctional protein FolD.